A 904-amino-acid polypeptide reads, in one-letter code: Alanine--tRNA ligase (904 aa).

Residues His584, His588, Cys687, and His691 each contribute to the Zn(2+) site.

This sequence belongs to the class-II aminoacyl-tRNA synthetase family. Zn(2+) serves as cofactor.

Its subcellular location is the cytoplasm. It catalyses the reaction tRNA(Ala) + L-alanine + ATP = L-alanyl-tRNA(Ala) + AMP + diphosphate. Catalyzes the attachment of alanine to tRNA(Ala) in a two-step reaction: alanine is first activated by ATP to form Ala-AMP and then transferred to the acceptor end of tRNA(Ala). Also edits incorrectly charged Ser-tRNA(Ala) and Gly-tRNA(Ala) via its editing domain. In Mycobacterium tuberculosis (strain ATCC 25177 / H37Ra), this protein is Alanine--tRNA ligase.